We begin with the raw amino-acid sequence, 499 residues long: Cysteine--tRNA ligase (499 aa).

C29 serves as a coordination point for Zn(2+). Positions 31 to 41 match the 'HIGH' region motif; it reads VTVYDLCHLGH. C213, H238, and E242 together coordinate Zn(2+). Positions 270–274 match the 'KMSKS' region motif; that stretch reads KMSKS. K273 provides a ligand contact to ATP.

It belongs to the class-I aminoacyl-tRNA synthetase family. In terms of assembly, monomer. Requires Zn(2+) as cofactor.

It localises to the cytoplasm. The catalysed reaction is tRNA(Cys) + L-cysteine + ATP = L-cysteinyl-tRNA(Cys) + AMP + diphosphate. This is Cysteine--tRNA ligase from Prochlorococcus marinus (strain MIT 9303).